The primary structure comprises 984 residues: UPF0592 protein YDL073W (984 aa).

Residues Lys675–Ser712 are disordered. Acidic residues predominate over residues Gln687–Asp698.

Belongs to the UPF0592 family.

This Saccharomyces cerevisiae (strain ATCC 204508 / S288c) (Baker's yeast) protein is UPF0592 protein YDL073W.